Here is a 126-residue protein sequence, read N- to C-terminus: Putative lipoprotein LprD (126 aa).

An N-terminal signal peptide occupies residues 1–21 (MSTTRRRRPALIALVIIATCG). Residue C22 is the site of N-palmitoyl cysteine attachment. C22 carries the S-diacylglycerol cysteine lipid modification. Residues 40–60 (FQNLGYALQWPLFAWFCVYAY) traverse the membrane as a helical segment. Positions 70-101 (PPQPPTGGAAAEIPAGLLPERPKPAQQPPDDP) are disordered.

The protein to M.leprae ML1177.

It localises to the cell membrane. This Mycobacterium tuberculosis (strain CDC 1551 / Oshkosh) protein is Putative lipoprotein LprD (lprD).